A 63-amino-acid chain; its full sequence is Conotoxin PnMRCL-0111 (63 aa).

The signal sequence occupies residues 1–22 (MHCLSVFVILLLLTASAPSVDA). Positions 23–50 (QPKTEDDVPLSSFHDDLQRTVRTLLDIR) are excised as a propeptide. Tryptophan amide is present on tryptophan 62.

The protein belongs to the conotoxin T superfamily. In terms of processing, contains 2 disulfide bonds that can be either 'C1-C3, C2-C4' or 'C1-C4, C2-C3', since these disulfide connectivities have been observed for conotoxins with cysteine framework V (for examples, see AC P0DQQ7 and AC P81755). In terms of tissue distribution, expressed by the venom duct.

The protein localises to the secreted. This chain is Conotoxin PnMRCL-0111, found in Conus pennaceus (Feathered cone).